A 268-amino-acid polypeptide reads, in one-letter code: MSSDSSREENVYLAKLAEQAERYEEMVEFMEKVAKTVETEELTVEERNLLSVAYKNVIGARRASWRIISSIEQKEDSRGNSDHVSIIKDYRGKIETELSKICDGILNLLEAHLIPAASLAESKVFYLKMKGDYHRYLAEFKTGAERKEAAESTLVAYKSAQDIALADLAPTHPIRLGLALNFSVFYYEILNSSDRACSLAKQAFDEAISELDTLGEESYKDSTLIMQLLRDNLTLWTSDLNDEAGDDIKEAPKEVQKVDEQAQPPPSQ.

Phosphoserine occurs at positions 69 and 192. Thr-213 bears the Phosphothreonine mark. A disordered region spans residues 243 to 268 (EAGDDIKEAPKEVQKVDEQAQPPPSQ). Residues 246–260 (DDIKEAPKEVQKVDE) are compositionally biased toward basic and acidic residues. At Ser-267 the chain carries Phosphoserine.

Belongs to the 14-3-3 family. Interacts with EDE1. Interacts with DREB1A and DREB1B in the nucleus. Interacts with CINV1.

The protein resides in the cytoplasm. The protein localises to the nucleus. Its function is as follows. Is associated with a DNA binding complex that binds to the G box, a well-characterized cis-acting DNA regulatory element found in plant genes. May be involved in cell cycle regulation by binding to soluble EDE1 and sequestering it in an inactive form during the early stages of mitosis. This is 14-3-3-like protein GF14 upsilon (GRF5) from Arabidopsis thaliana (Mouse-ear cress).